A 404-amino-acid polypeptide reads, in one-letter code: Argininosuccinate synthase (404 aa).

ATP is bound by residues 12 to 20 (AYSGGLDTS) and Ala-40. L-citrulline contacts are provided by Tyr-92 and Ser-97. ATP is bound at residue Gly-122. L-aspartate contacts are provided by Thr-124, Asn-128, and Asp-129. Asn-128 contacts L-citrulline. Arg-132, Ser-181, Ser-190, Glu-266, and Tyr-278 together coordinate L-citrulline.

The protein belongs to the argininosuccinate synthase family. Type 1 subfamily. In terms of assembly, homotetramer.

The protein resides in the cytoplasm. It carries out the reaction L-citrulline + L-aspartate + ATP = 2-(N(omega)-L-arginino)succinate + AMP + diphosphate + H(+). The protein operates within amino-acid biosynthesis; L-arginine biosynthesis; L-arginine from L-ornithine and carbamoyl phosphate: step 2/3. In Erwinia tasmaniensis (strain DSM 17950 / CFBP 7177 / CIP 109463 / NCPPB 4357 / Et1/99), this protein is Argininosuccinate synthase.